The chain runs to 412 residues: Multifunctional CCA protein (412 aa).

2 residues coordinate ATP: Gly8 and Arg11. Residues Gly8 and Arg11 each coordinate CTP. Mg(2+)-binding residues include Asp21 and Asp23. Positions 91, 137, and 140 each coordinate ATP. Positions 91, 137, and 140 each coordinate CTP. An HD domain is found at 225-326 (TGIHVMMVID…ADMLQATDAY (102 aa)).

This sequence belongs to the tRNA nucleotidyltransferase/poly(A) polymerase family. Bacterial CCA-adding enzyme type 1 subfamily. In terms of assembly, monomer. Can also form homodimers and oligomers. The cofactor is Mg(2+). Ni(2+) serves as cofactor.

It catalyses the reaction a tRNA precursor + 2 CTP + ATP = a tRNA with a 3' CCA end + 3 diphosphate. It carries out the reaction a tRNA with a 3' CCA end + 2 CTP + ATP = a tRNA with a 3' CCACCA end + 3 diphosphate. Its function is as follows. Catalyzes the addition and repair of the essential 3'-terminal CCA sequence in tRNAs without using a nucleic acid template. Adds these three nucleotides in the order of C, C, and A to the tRNA nucleotide-73, using CTP and ATP as substrates and producing inorganic pyrophosphate. tRNA 3'-terminal CCA addition is required both for tRNA processing and repair. Also involved in tRNA surveillance by mediating tandem CCA addition to generate a CCACCA at the 3' terminus of unstable tRNAs. While stable tRNAs receive only 3'-terminal CCA, unstable tRNAs are marked with CCACCA and rapidly degraded. This Nitrosomonas eutropha (strain DSM 101675 / C91 / Nm57) protein is Multifunctional CCA protein.